Here is a 78-residue protein sequence, read N- to C-terminus: Small ribosomal subunit protein bS18 (78 aa).

Belongs to the bacterial ribosomal protein bS18 family. Part of the 30S ribosomal subunit. Forms a tight heterodimer with protein bS6.

Its function is as follows. Binds as a heterodimer with protein bS6 to the central domain of the 16S rRNA, where it helps stabilize the platform of the 30S subunit. This Lactobacillus delbrueckii subsp. bulgaricus (strain ATCC BAA-365 / Lb-18) protein is Small ribosomal subunit protein bS18.